Reading from the N-terminus, the 445-residue chain is tRNA-2-methylthio-N(6)-dimethylallyladenosine synthase (445 aa).

Residues 2 to 117 form the MTTase N-terminal domain; it reads QGLYIKSYGC…LPELIVKARK (116 aa). Positions 11, 47, 80, 157, 161, and 164 each coordinate [4Fe-4S] cluster. The 232-residue stretch at 143 to 374 folds into the Radical SAM core domain; the sequence is KNQKVSAFIS…QELVHKQQLE (232 aa). The TRAM domain maps to 377 to 441; it reads KKMIGETHPV…KNHLTGIIPN (65 aa).

The protein belongs to the methylthiotransferase family. MiaB subfamily. Monomer. [4Fe-4S] cluster serves as cofactor.

The protein resides in the cytoplasm. The enzyme catalyses N(6)-dimethylallyladenosine(37) in tRNA + (sulfur carrier)-SH + AH2 + 2 S-adenosyl-L-methionine = 2-methylsulfanyl-N(6)-dimethylallyladenosine(37) in tRNA + (sulfur carrier)-H + 5'-deoxyadenosine + L-methionine + A + S-adenosyl-L-homocysteine + 2 H(+). Its function is as follows. Catalyzes the methylthiolation of N6-(dimethylallyl)adenosine (i(6)A), leading to the formation of 2-methylthio-N6-(dimethylallyl)adenosine (ms(2)i(6)A) at position 37 in tRNAs that read codons beginning with uridine. This Ehrlichia ruminantium (strain Welgevonden) protein is tRNA-2-methylthio-N(6)-dimethylallyladenosine synthase.